The sequence spans 157 residues: Small ribosomal subunit protein bS6 (157 aa).

Basic and acidic residues predominate over residues 96 to 151 (HEEGPSAMMRKADRDRDRDERGGGGFRGDREGGFRGDREGGGFRGDRGPRRPRDDA). Residues 96–157 (HEEGPSAMMR…RDDAPAATEE (62 aa)) form a disordered region.

Belongs to the bacterial ribosomal protein bS6 family.

In terms of biological role, binds together with bS18 to 16S ribosomal RNA. In Rhodopseudomonas palustris (strain BisA53), this protein is Small ribosomal subunit protein bS6.